Reading from the N-terminus, the 352-residue chain is Cyclin-dependent kinase-like 1 (352 aa).

One can recognise a Protein kinase domain in the interval 4 to 287 (YEKIGKIGEG…CEQLLQHPYF (284 aa)). ATP-binding positions include 10–18 (IGEGSYGVV) and K33. Positions 45 to 51 (KKIALRE) match the [NKR]KIAxRE motif. D126 functions as the Proton acceptor in the catalytic mechanism.

It belongs to the protein kinase superfamily. CMGC Ser/Thr protein kinase family. CDC2/CDKX subfamily.

It localises to the cytoplasm. The protein localises to the nucleus. The enzyme catalyses L-seryl-[protein] + ATP = O-phospho-L-seryl-[protein] + ADP + H(+). It carries out the reaction L-threonyl-[protein] + ATP = O-phospho-L-threonyl-[protein] + ADP + H(+). In Rattus norvegicus (Rat), this protein is Cyclin-dependent kinase-like 1.